The sequence spans 160 residues: 3-dehydroquinate dehydratase (160 aa).

Tyrosine 22 serves as the catalytic Proton acceptor. 3 residues coordinate substrate: asparagine 73, histidine 79, and aspartate 86. Histidine 99 (proton donor) is an active-site residue. Residues isoleucine 100–serine 101 and arginine 110 contribute to the substrate site.

It belongs to the type-II 3-dehydroquinase family. Homododecamer.

The catalysed reaction is 3-dehydroquinate = 3-dehydroshikimate + H2O. Its pathway is metabolic intermediate biosynthesis; chorismate biosynthesis; chorismate from D-erythrose 4-phosphate and phosphoenolpyruvate: step 3/7. Catalyzes a trans-dehydration via an enolate intermediate. The chain is 3-dehydroquinate dehydratase from Sulfurimonas denitrificans (strain ATCC 33889 / DSM 1251) (Thiomicrospira denitrificans (strain ATCC 33889 / DSM 1251)).